A 193-amino-acid polypeptide reads, in one-letter code: Pyridoxal 5'-phosphate synthase subunit PdxT (193 aa).

52–54 (GES) provides a ligand contact to L-glutamine. C84 serves as the catalytic Nucleophile. L-glutamine-binding positions include R111 and 139 to 140 (IR). Catalysis depends on charge relay system residues H176 and E178.

This sequence belongs to the glutaminase PdxT/SNO family. In the presence of PdxS, forms a dodecamer of heterodimers. Only shows activity in the heterodimer.

The enzyme catalyses aldehydo-D-ribose 5-phosphate + D-glyceraldehyde 3-phosphate + L-glutamine = pyridoxal 5'-phosphate + L-glutamate + phosphate + 3 H2O + H(+). The catalysed reaction is L-glutamine + H2O = L-glutamate + NH4(+). Its pathway is cofactor biosynthesis; pyridoxal 5'-phosphate biosynthesis. Functionally, catalyzes the hydrolysis of glutamine to glutamate and ammonia as part of the biosynthesis of pyridoxal 5'-phosphate. The resulting ammonia molecule is channeled to the active site of PdxS. The polypeptide is Pyridoxal 5'-phosphate synthase subunit PdxT (Pasteurella multocida (strain Pm70)).